We begin with the raw amino-acid sequence, 342 residues long: tRNA dimethylallyltransferase (342 aa).

39–46 (GPTGSGKT) contacts ATP. 41 to 46 (TGSGKT) is a substrate binding site. Residues 64–67 (DSMQ) are interaction with substrate tRNA.

The protein belongs to the IPP transferase family. In terms of assembly, monomer. Mg(2+) serves as cofactor.

The enzyme catalyses adenosine(37) in tRNA + dimethylallyl diphosphate = N(6)-dimethylallyladenosine(37) in tRNA + diphosphate. Functionally, catalyzes the transfer of a dimethylallyl group onto the adenine at position 37 in tRNAs that read codons beginning with uridine, leading to the formation of N6-(dimethylallyl)adenosine (i(6)A). This chain is tRNA dimethylallyltransferase, found in Chlamydia felis (strain Fe/C-56) (Chlamydophila felis).